The following is an 85-amino-acid chain: UPF0473 protein CLK_1946 (85 aa).

Belongs to the UPF0473 family.

This is UPF0473 protein CLK_1946 from Clostridium botulinum (strain Loch Maree / Type A3).